Consider the following 225-residue polypeptide: 7-carboxy-7-deazaguanine synthase (225 aa).

Residues 12 to 14 (IQG) and R27 contribute to the substrate site. A Radical SAM core domain is found at 18–225 (YIGVRQLFVR…PQVHKYLGVR (208 aa)). Positions 31, 35, and 38 each coordinate [4Fe-4S] cluster. T40 contributes to the Mg(2+) binding site. Residue T80 participates in substrate binding. Residue G82 coordinates S-adenosyl-L-methionine.

This sequence belongs to the radical SAM superfamily. 7-carboxy-7-deazaguanine synthase family. In terms of assembly, homodimer. [4Fe-4S] cluster is required as a cofactor. S-adenosyl-L-methionine serves as cofactor. The cofactor is Mg(2+).

It carries out the reaction 6-carboxy-5,6,7,8-tetrahydropterin + H(+) = 7-carboxy-7-deazaguanine + NH4(+). It functions in the pathway purine metabolism; 7-cyano-7-deazaguanine biosynthesis. Functionally, catalyzes the complex heterocyclic radical-mediated conversion of 6-carboxy-5,6,7,8-tetrahydropterin (CPH4) to 7-carboxy-7-deazaguanine (CDG), a step common to the biosynthetic pathways of all 7-deazapurine-containing compounds. This Archaeoglobus fulgidus (strain ATCC 49558 / DSM 4304 / JCM 9628 / NBRC 100126 / VC-16) protein is 7-carboxy-7-deazaguanine synthase.